A 128-amino-acid polypeptide reads, in one-letter code: 3-aminoacrylate deaminase RutC (128 aa).

This sequence belongs to the RutC family. In terms of assembly, homotrimer.

It carries out the reaction (Z)-3-aminoacrylate + H2O + H(+) = 3-oxopropanoate + NH4(+). In terms of biological role, involved in pyrimidine catabolism. Catalyzes the deamination of 3-aminoacrylate to malonic semialdehyde, a reaction that can also occur spontaneously. RutC may facilitate the reaction and modulate the metabolic fitness, rather than catalyzing essential functions. The sequence is that of 3-aminoacrylate deaminase RutC from Shigella flexneri serotype X (strain 2002017).